The chain runs to 490 residues: Monocarboxylate transporter 3 (490 aa).

Residues 1–14 (MGAGGPRRGAGPPD) are Cytoplasmic-facing. The chain crosses the membrane as a helical span at residues 15-35 (GGWGWVVLGACFVITGFAYGF). Residues 36 to 58 (PKAVSVFFRELKRDFGAGYSDTA) lie on the Extracellular side of the membrane. The helical transmembrane segment at 59–79 (WVSSIMLAMLYGTGPLSSILV) threads the bilayer. Residues 80-85 (TRFGCR) lie on the Cytoplasmic side of the membrane. The chain crosses the membrane as a helical span at residues 86–106 (PVMLAGGLLASAGMILASFAS). Residues 107-115 (RLLELYLTA) lie on the Extracellular side of the membrane. A helical transmembrane segment spans residues 116 to 136 (GVLTGLGLALNFQPSLIMLGL). At 137–147 (YFERRRPLANG) the chain is on the cytoplasmic side. Residues 148–168 (LAAAGSPVFLSTLSPLGQLLG) traverse the membrane as a helical segment. The Extracellular portion of the chain corresponds to 169–172 (ERFG). The helical transmembrane segment at 173–193 (WRGGFLLFGGLLLHCCACGAV) threads the bilayer. Over 194 to 230 (MRPPPGPQPRPDPAPPGGRARHRQLLDLAVCTDRTFM) the chain is Cytoplasmic. The chain crosses the membrane as a helical span at residues 231 to 251 (VYMVTKFLMALGLFVPAILLV). At 252-257 (NYAKDA) the chain is on the extracellular side. Residues 258–278 (GVPDAEAAFLLSIVGFVDIVA) form a helical membrane-spanning segment. Over 279 to 293 (RPACGALAGLGRLRP) the chain is Cytoplasmic. The helical transmembrane segment at 294–314 (HVPYLFSLALLANGLTDLISA) threads the bilayer. At 315-318 (RARS) the chain is on the extracellular side. The chain crosses the membrane as a helical span at residues 319-339 (YGTLVAFCIAFGLSYGMVGAL). Residues 340–352 (QFEVLMATVGAPR) are Cytoplasmic-facing. The helical transmembrane segment at 353 to 373 (FPSALGLVLLVEAVAVLIGPP) threads the bilayer. The Extracellular portion of the chain corresponds to 374–386 (SAGRLVDALKNYE). Residues 387 to 407 (IIFYLAGSEVVLAGVFMAVTT) form a helical membrane-spanning segment. Residues 408–490 (YCCQRCSKDI…GGHEAHGQNA (83 aa)) lie on the Cytoplasmic side of the membrane. Residues 419–490 (PGPSAEGGTS…GGHEAHGQNA (72 aa)) form a disordered region. 2 basolateral sorting signal regions span residues 426–460 (GTSD…VLSP) and 461–480 (RAGS…HESV). The span at 475-490 (LSHESVGGHEAHGQNA) shows a compositional bias: basic and acidic residues.

The protein belongs to the major facilitator superfamily. Monocarboxylate porter (TC 2.A.1.13) family. In terms of tissue distribution, retinal pigment epithelium.

The protein localises to the basolateral cell membrane. The enzyme catalyses (S)-lactate(in) + H(+)(in) = (S)-lactate(out) + H(+)(out). Its function is as follows. Probable retinal pigment epithelium (RPE)-specific proton-coupled L-lactate transporter. May facilitate transport of lactate and H(+) out of the retina and could therefore play a role in pH and ion homeostasis of the outer retina. The sequence is that of Monocarboxylate transporter 3 (Slc16a8) from Rattus norvegicus (Rat).